The following is a 195-amino-acid chain: Holliday junction branch migration complex subunit RuvA (195 aa).

A domain I region spans residues 1–66 (MNYLIFKVIY…LIIKDLYGFR (66 aa)). Positions 67–141 (TYNERLLFID…KYINKVNDKN (75 aa)) are domain II. A region of interest (flexible linker) is located at residue N141. The tract at residues 141–195 (NNWAKELSIGLENLGYTKKDIEYAITKVKINSQQDIDISEIISSAIKEISLRHEN) is domain III.

Belongs to the RuvA family. In terms of assembly, homotetramer. Forms an RuvA(8)-RuvB(12)-Holliday junction (HJ) complex. HJ DNA is sandwiched between 2 RuvA tetramers; dsDNA enters through RuvA and exits via RuvB. An RuvB hexamer assembles on each DNA strand where it exits the tetramer. Each RuvB hexamer is contacted by two RuvA subunits (via domain III) on 2 adjacent RuvB subunits; this complex drives branch migration. In the full resolvosome a probable DNA-RuvA(4)-RuvB(12)-RuvC(2) complex forms which resolves the HJ.

It is found in the cytoplasm. In terms of biological role, the RuvA-RuvB-RuvC complex processes Holliday junction (HJ) DNA during genetic recombination and DNA repair, while the RuvA-RuvB complex plays an important role in the rescue of blocked DNA replication forks via replication fork reversal (RFR). RuvA specifically binds to HJ cruciform DNA, conferring on it an open structure. The RuvB hexamer acts as an ATP-dependent pump, pulling dsDNA into and through the RuvAB complex. HJ branch migration allows RuvC to scan DNA until it finds its consensus sequence, where it cleaves and resolves the cruciform DNA. The protein is Holliday junction branch migration complex subunit RuvA of Ureaplasma parvum serovar 3 (strain ATCC 27815 / 27 / NCTC 11736).